The following is a 162-amino-acid chain: UPF0114 protein VCM66_0196 (162 aa).

4 consecutive transmembrane segments (helical) span residues 15–35 (IMAPIYLGLSLLLLALGIKFF), 53–73 (LILVALSLIDVSLVGGLIVMV), 109–126 (VSASIVAISSIHLLKVFM), and 136–156 (IKWYLLLHITFVVSAFAMGYL).

Belongs to the UPF0114 family.

It localises to the cell membrane. The chain is UPF0114 protein VCM66_0196 from Vibrio cholerae serotype O1 (strain M66-2).